Consider the following 205-residue polypeptide: Transcription antitermination protein NusB (205 aa).

It belongs to the NusB family.

Its function is as follows. Involved in transcription antitermination. Required for transcription of ribosomal RNA (rRNA) genes. Binds specifically to the boxA antiterminator sequence of the ribosomal RNA (rrn) operons. The polypeptide is Transcription antitermination protein NusB (Acaryochloris marina (strain MBIC 11017)).